The primary structure comprises 693 residues: Elongation factor G (693 aa).

A tr-type G domain is found at 8 to 282; it reads EKTRNIGIMA…AVIDYLPSPL (275 aa). GTP is bound by residues 17–24, 81–85, and 135–138; these read AHVDAGKT, DTPGH, and NKMD.

This sequence belongs to the TRAFAC class translation factor GTPase superfamily. Classic translation factor GTPase family. EF-G/EF-2 subfamily.

It localises to the cytoplasm. Catalyzes the GTP-dependent ribosomal translocation step during translation elongation. During this step, the ribosome changes from the pre-translocational (PRE) to the post-translocational (POST) state as the newly formed A-site-bound peptidyl-tRNA and P-site-bound deacylated tRNA move to the P and E sites, respectively. Catalyzes the coordinated movement of the two tRNA molecules, the mRNA and conformational changes in the ribosome. The polypeptide is Elongation factor G (Streptococcus pneumoniae (strain ATCC 700669 / Spain 23F-1)).